The chain runs to 737 residues: ATP-dependent RNA helicase DDX50 (737 aa).

The tract at residues 1 to 131 (MPGKLLWGDI…SDNKLEETLT (131 aa)) is disordered. Acidic residues predominate over residues 11 to 20 (MELEAPLEES). Composition is skewed to basic and acidic residues over residues 38-51 (HYDS…RENG), 67-87 (KEKL…EFSK), and 117-131 (STHK…ETLT). Ser-41, Ser-82, Ser-86, Ser-121, and Ser-122 each carry phosphoserine. A Glycyl lysine isopeptide (Lys-Gly) (interchain with G-Cter in SUMO2) cross-link involves residue Lys-125. Positions 137-165 (GAFSNFPISEETIKLLKGRGVTYLFPIQV) match the Q motif motif. In terms of domain architecture, Helicase ATP-binding spans 168 to 347 (FGPVYEGKDL…KKYMKSRYEQ (180 aa)). 181–188 (ARTGTGKT) contributes to the ATP binding site. Thr-247 is modified (phosphothreonine). The DEVD box motif lies at 290-293 (DEVD). The Helicase C-terminal domain occupies 380–524 (DVLQVYSGSE…GVPSTMDLVK (145 aa)). A Phosphoserine modification is found at Ser-518. Residues 668–737 (YDGNTSSNSR…RSGGHKRSFD (70 aa)) form a disordered region. Residues 673-687 (SSNSRQRSGWSSGRS) show a composition bias toward low complexity. Gly residues predominate over residues 691 to 701 (GRSGGRSGGRS). Over residues 702-712 (GRQSRQGSRSG) the composition is skewed to low complexity. The segment covering 720–737 (RSGNRNRSRSGGHKRSFD) has biased composition (basic residues).

It belongs to the DEAD box helicase family. DDX21/DDX50 subfamily. In terms of assembly, interacts with C1QBP. Interacts with the ubiquitin ligase CTLH complex through GID4. Interacts with TICAM1. In terms of tissue distribution, highest expression in skeletal muscle, liver, heart, placenta, and kidney.

Its subcellular location is the nucleus. It is found in the nucleolus. The protein resides in the cytoplasm. The enzyme catalyses ATP + H2O = ADP + phosphate + H(+). In terms of biological role, ATP-dependent RNA helicase that may play a role in various aspects of RNA metabolism including pre-mRNA splicing or ribosomal RNA production. Also acts as a viral restriction factor and promotes the activation of the NF-kappa-B and IRF3 signaling pathways following its stimulation with viral RNA or infection with RNA and DNA viruses. For instance, decreases vaccinia virus, herpes simplex virus, Zika virus or dengue virus replication during the early stage of infection. Mechanistically, acts via the adapter TICAM1 and independently of the DDX1-DDX21-DHX36 helicase complex to induce the production of interferon-beta. The protein is ATP-dependent RNA helicase DDX50 (DDX50) of Homo sapiens (Human).